Reading from the N-terminus, the 869-residue chain is Sodium-dependent phosphate transporter (869 aa).

Topologically, residues 1 to 18 are extracellular; it reads MEAVAELSAPSLAGAPGE. Residues 19–39 traverse the membrane as a helical segment; the sequence is YTWIVAVAGVTCFLTAFAIGA. Topologically, residues 40–54 are cytoplasmic; it reads NDVANTFSSSVGSRA. A helical membrane pass occupies residues 55 to 75; sequence IPLWAAIGMSAVLETVGATLL. The Extracellular portion of the chain corresponds to 76–97; that stretch reads GGAVTDSIRSKIIDFEVFRETP. The helical transmembrane segment at 98 to 118 threads the bilayer; it reads SILMTGMLCALVGAGLWLFLA. Topologically, residues 119–120 are cytoplasmic; that stretch reads NH. A helical membrane pass occupies residues 121–141; that stretch reads LGLPVSTTHSIIGALLGFGLA. Residues 142–154 are Extracellular-facing; it reads SGNVRAVKWTQVA. A helical transmembrane segment spans residues 155–175; the sequence is FIVGSWVAAPLAASAAGATIF. Residues 176–196 lie on the Cytoplasmic side of the membrane; sequence VCMRRLILRSRQPLRRAKRFL. Residues 197-217 form a helical membrane-spanning segment; the sequence is WIFIYLITLTFSVFLVFKNFF. At 218–250 the chain is on the extracellular side; the sequence is ELNVSCDQMVAGGRVEHFEPCRISRWADAHSGT. The chain crosses the membrane as a helical span at residues 251-271; the sequence is ALGIAVALSVALTFVISCLVY. Residues 272–720 lie on the Cytoplasmic side of the membrane; that stretch reads RFAFYRVESY…SGSADSEIGS (449 aa). Disordered regions lie at residues 286–312, 374–401, and 453–571; these read KRSS…GGLL, AAAA…GSSV, and SAFL…KRER. Residues 457–481 are compositionally biased toward low complexity; that stretch reads SSPSSSVPPSSPSPSSTPSSPSASP. Pro residues predominate over residues 482–491; sequence RRPPSRPPVP. Positions 492–509 are enriched in low complexity; sequence RTCSPAPVSPSVPRAFAS. Residues 556 to 571 are compositionally biased toward basic and acidic residues; sequence PHPERRDEVPAAKRER. Residues 721-741 traverse the membrane as a helical segment; the sequence is PWYILLFGGLSMSLGLALLGY. Over 742 to 759 the chain is Extracellular; the sequence is RVIKTVGVKLVKITPARG. Residues 760 to 780 form a helical membrane-spanning segment; sequence FSMELGAAWTVLIFSAIGIPL. At 781 to 837 the chain is on the cytoplasmic side; it reads STTHCAVGSTVGVGLMEPKHPRRETGDGPVAEGEEPKKRAVQCPVINTASVNWKLFG. A helical membrane pass occupies residues 838–858; that stretch reads GVFVSWIITIAFSALVTAALF. The Extracellular portion of the chain corresponds to 859 to 869; the sequence is SFAAYSPRMVS.

The protein belongs to the inorganic phosphate transporter (PiT) (TC 2.A.20) family.

The protein resides in the cell membrane. Its subcellular location is the vacuole membrane. It localises to the cytoplasmic vesicle membrane. It carries out the reaction 2 Na(+)(out) + phosphate(out) = 2 Na(+)(in) + phosphate(in). In terms of biological role, sodium-phosphate symporter which preferentially transports the monovalent form of phosphate with a stoichiometry of two sodium ions per phosphate ion. Plays a role in stabilizing the cytosolic pH and osmoregulation. May be required for optimal virulence of parasites in vivo. This chain is Sodium-dependent phosphate transporter, found in Toxoplasma gondii (strain ATCC 50861 / VEG).